A 203-amino-acid chain; its full sequence is Non-specific lipid transfer protein GPI-anchored 20 (203 aa).

The N-terminal stretch at 1–21 (MSKIISLVVAMIAVLALPIRG) is a signal peptide. 4 disulfide bridges follow: cysteine 29-cysteine 74, cysteine 40-cysteine 58, cysteine 59-cysteine 99, and cysteine 72-cysteine 108. Asparagine 46, asparagine 50, and asparagine 88 each carry an N-linked (GlcNAc...) asparagine glycan. Residues 119–182 (GPAATFGPSM…TSRPSETPSS (64 aa)) are disordered. 2 stretches are compositionally biased toward polar residues: residues 144–156 (AAQT…TRPF) and 169–179 (DGGSTSRPSET). A lipid anchor (GPI-anchor amidated serine) is attached at serine 172. Residues 173–203 (TSRPSETPSSAYALSPSLLFFSIALVALKFY) constitute a propeptide, removed in mature form.

This sequence belongs to the plant LTP family. As to expression, expressed in seedlings, preferentially in hypocotyls and roots. Also observed in siliques and sepals.

Its subcellular location is the cell membrane. In terms of biological role, probable lipid transfer protein. This Arabidopsis thaliana (Mouse-ear cress) protein is Non-specific lipid transfer protein GPI-anchored 20.